The chain runs to 80 residues: Conotoxin MaIr193 (80 aa).

Positions 1 to 22 (MKLTCMMIVAVLFLTAWTLVTA) are cleaved as a signal peptide. Positions 23 to 51 (DGTRDGLKNRFPKARLEMKNSEAPRSRGR) are excised as a propeptide. Cystine bridges form between C52-C69, C59-C73, and C68-C77. P64 carries the 4-hydroxyproline modification.

Belongs to the conotoxin O1 superfamily. In terms of tissue distribution, expressed by the venom duct.

It is found in the secreted. The sequence is that of Conotoxin MaIr193 from Conus marmoreus (Marble cone).